Consider the following 278-residue polypeptide: Tryptophan synthase alpha chain (278 aa).

Residues glutamate 49 and aspartate 60 each act as proton acceptor in the active site.

The protein belongs to the TrpA family. In terms of assembly, tetramer of two alpha and two beta chains.

The enzyme catalyses (1S,2R)-1-C-(indol-3-yl)glycerol 3-phosphate + L-serine = D-glyceraldehyde 3-phosphate + L-tryptophan + H2O. It participates in amino-acid biosynthesis; L-tryptophan biosynthesis; L-tryptophan from chorismate: step 5/5. Functionally, the alpha subunit is responsible for the aldol cleavage of indoleglycerol phosphate to indole and glyceraldehyde 3-phosphate. The protein is Tryptophan synthase alpha chain of Corynebacterium diphtheriae (strain ATCC 700971 / NCTC 13129 / Biotype gravis).